The following is a 163-amino-acid chain: Nucleotide-binding protein AM1_1863 (163 aa).

Belongs to the YajQ family.

In terms of biological role, nucleotide-binding protein. In Acaryochloris marina (strain MBIC 11017), this protein is Nucleotide-binding protein AM1_1863.